A 140-amino-acid polypeptide reads, in one-letter code: 3-hydroxyacyl-[acyl-carrier-protein] dehydratase FabZ (140 aa).

Residue His-47 is part of the active site.

It belongs to the thioester dehydratase family. FabZ subfamily.

It is found in the cytoplasm. It carries out the reaction a (3R)-hydroxyacyl-[ACP] = a (2E)-enoyl-[ACP] + H2O. Functionally, involved in unsaturated fatty acids biosynthesis. Catalyzes the dehydration of short chain beta-hydroxyacyl-ACPs and long chain saturated and unsaturated beta-hydroxyacyl-ACPs. In Streptococcus sanguinis (strain SK36), this protein is 3-hydroxyacyl-[acyl-carrier-protein] dehydratase FabZ.